Consider the following 423-residue polypeptide: GTPase Obg (423 aa).

The Obg domain occupies 1-158 (MFYDEAKIYV…RWLVLELKLL (158 aa)). Positions 159–328 (ADVGLIGLPN…LLYHVSGLLA (170 aa)) constitute an OBG-type G domain. GTP is bound by residues 165 to 172 (GLPNAGKS), 190 to 194 (FTTLT), 212 to 215 (DIPG), 281 to 284 (NKMD), and 309 to 311 (SAA). Residues Ser-172 and Thr-192 each contribute to the Mg(2+) site. One can recognise an OCT domain in the interval 336–421 (VTAPEEEKVT…IGKFEFEYVE (86 aa)).

This sequence belongs to the TRAFAC class OBG-HflX-like GTPase superfamily. OBG GTPase family. Monomer. Requires Mg(2+) as cofactor.

It localises to the cytoplasm. An essential GTPase which binds GTP, GDP and possibly (p)ppGpp with moderate affinity, with high nucleotide exchange rates and a fairly low GTP hydrolysis rate. Plays a role in control of the cell cycle, stress response, ribosome biogenesis and in those bacteria that undergo differentiation, in morphogenesis control. The polypeptide is GTPase Obg (Moorella thermoacetica (strain ATCC 39073 / JCM 9320)).